Reading from the N-terminus, the 506-residue chain is Procardosin-B (506 aa).

The first 24 residues, 1–24 (MGTPIKASLLALFLFFLLSPTAFS), serve as a signal peptide directing secretion. Positions 25–70 (VSNGGLLRVGLKKRKVDRLDQLRAHGVHMLGNARKDFGFRRTLSDS) are excised as a propeptide. The Peptidase A1 domain occupies 85 to 503 (YYGEIGIGTP…DYGKLRVGFA (419 aa)). Residue D103 is part of the active site. C116 and C122 are joined by a disulfide. N139 and N252 each carry an N-linked (GlcNAc...) asparagine glycan. The cysteines at positions 281 and 285 are disulfide-linked. The active site involves D290. A Saposin B-type domain is found at 315-417 (VLNQQCKTLV…NEVCDQLPTS (103 aa)). Cystine bridges form between C320-C411, C345-C383, C351-C380, and C425-C462. The N-linked (GlcNAc...) asparagine glycan is linked to N397.

It belongs to the peptidase A1 family. Heterodimer of a light chain and a heavy chain. An intermediate form is produced first, and undergoes proteolytic processing to remove the internal plant-specific insert (PSI) and the propeptide. As to expression, detected in pistils, but not in seeds, bracts, midribs, roots, leaves or stamen extracts. Detected in seeds. In stigmas and styles, detected in the transmitting tissue and in contiguous subepidermal layers at the longitudenal grooves of the stigma (at protein level).

It is found in the microsome membrane. The protein resides in the protein storage vacuole. It localises to the secreted. The protein localises to the cell wall. Its subcellular location is the extracellular space. It is found in the extracellular matrix. With respect to regulation, inhibited by the specific aspartic proteinase inhibitors diazoacetyl-noleucine methyl ester and pepstatin. Its function is as follows. Aspartic protease. Cleaves alpha-lactalbumin but not beta-lactoglobulin. In Cynara cardunculus (Cardoon), this protein is Procardosin-B.